The primary structure comprises 80 residues: Exodeoxyribonuclease 7 small subunit (80 aa).

This sequence belongs to the XseB family. In terms of assembly, heterooligomer composed of large and small subunits.

It localises to the cytoplasm. It catalyses the reaction Exonucleolytic cleavage in either 5'- to 3'- or 3'- to 5'-direction to yield nucleoside 5'-phosphates.. In terms of biological role, bidirectionally degrades single-stranded DNA into large acid-insoluble oligonucleotides, which are then degraded further into small acid-soluble oligonucleotides. The polypeptide is Exodeoxyribonuclease 7 small subunit (Pseudomonas aeruginosa (strain LESB58)).